A 1092-amino-acid polypeptide reads, in one-letter code: MMDSPKIGNGLPVIGPGTDIGISSLHMVGYLGKNFDSAKVPSDEYCPACREKGKLKALKTYRISFQESIFLCEDLQCIYPLGSKSLNNLISPDLEECHTPHKPQKRKSLESSYKDSLLLANSKKTRNYIAIDGGKVLNSKHNGEVYDETSSNLPDSSGQQNPIRTADSLERNEILEADTVDMATTKDPATVDVSGTGRPSPQNEGCTSKLEMPLESKCTSFPQALCVQWKNAYALCWLDCILSALVHSEELKNTVTGLCSKEESIFWRLLTKYNQANTLLYTSQLSGVKDGDCKKLTSEIFAEIETCLNEVRDEIFISLQPQLRCTLGDMESPVFAFPLLLKLETHIEKLFLYSFSWDFECSQCGHQYQNRHMKSLVTFTNVIPEWHPLNAAHFGPCNNCNSKSQIRKMVLEKVSPIFMLHFVEGLPQNDLQHYAFHFEGCLYQITSVIQYRANNHFITWILDADGSWLECDDLKGPCSERHKKFEVPASEIHIVIWERKISQVTDKEAACLPLKKTNDQHALSNEKPVSLTSCSVGDAASAETASVTHPKDISVAPRTLSQDTAVTHGDHLLSGPKGLVDNILPLTLEETIQKTASVSQLNSEAFLLENKPVAENTGILKTNTLLSQESLMASSVSAPCNEKLIQDQFVDISFPSQVVNTNMQSVQLNTEDTVNTKSVNNTDATGLIQGVKSVEIEKDAQLKQFLTPKTEQLKPERVTSQVSNLKKKETTADSQTTTSKSLQNQSLKENQKKPFVGSWVKGLISRGASFMPLCVSAHNRNTITDLQPSVKGVNNFGGFKTKGINQKASHVSKKARKSASKPPPISKPPAGPPSSNGTAAHPHAHAASEVLEKSGSTSCGAQLNHSSYGNGISSANHEDLVEGQIHKLRLKLRKKLKAEKKKLAALMSSPQSRTVRSENLEQVPQDGSPNDCESIEDLLNELPYPIDIASESACTTVPGVSLYSSQTHEEILAELLSPTPVSTELSENGEGDFRYLGMGDSHIPPPVPSEFNDVSQNTHLRQDHNYCSPTKKNPCEVQPDSLTNNACVRTLNLESPMKTDIFDEFFSSSALNALANDTLDLPHFDEYLFENY.

Disordered stretches follow at residues valine 145–serine 168 and threonine 185–threonine 207. Polar residues-rich tracts occupy residues glutamate 148 to isoleucine 163 and glycine 197 to cysteine 206. The region spanning valine 227–lysine 500 is the USP domain. Catalysis depends on cysteine 236, which acts as the Nucleophile. The tract at residues cysteine 236 to valine 495 is SUMO-binding. Catalysis depends on histidine 456, which acts as the Proton acceptor. Disordered regions lie at residues leucine 713 to glutamate 749, glycine 797 to cysteine 859, and alanine 904 to asparagine 930. A compositionally biased stretch (polar residues) spans alanine 732–lysine 748. The segment covering histidine 810–alanine 819 has biased composition (basic residues). The segment covering lysine 821–proline 832 has biased composition (pro residues). Serine 909 carries the phosphoserine modification.

It belongs to the peptidase C19 family. Interacts with ELL.

The protein resides in the nucleus. It localises to the cajal body. Functionally, SUMO-specific isopeptidase involved in protein desumoylation. Specifically binds SUMO proteins with a higher affinity for SUMO2 and SUMO3 which it cleaves more efficiently. Also able to process full-length SUMO proteins to their mature forms. Plays a key role in RNA polymerase-II-mediated snRNA transcription in the Cajal bodies. Is a component of complexes that can bind to U snRNA genes. The polypeptide is SUMO-specific isopeptidase USPL1 (USPL1) (Homo sapiens (Human)).